Consider the following 444-residue polypeptide: Probable D-serine dehydratase (444 aa).

The residue at position 118 (Lys-118) is an N6-(pyridoxal phosphate)lysine.

The protein belongs to the serine/threonine dehydratase family. DsdA subfamily. The cofactor is pyridoxal 5'-phosphate.

It catalyses the reaction D-serine = pyruvate + NH4(+). This Acinetobacter baumannii (strain ATCC 17978 / DSM 105126 / CIP 53.77 / LMG 1025 / NCDC KC755 / 5377) protein is Probable D-serine dehydratase.